The following is a 329-amino-acid chain: Carbohydrate sulfotransferase chst-1 (329 aa).

The Cytoplasmic segment spans residues 1-3 (MLK). A helical; Signal-anchor for type II membrane protein transmembrane segment spans residues 4–23 (WFIISCCLLTAISYSTYYLF). Residues 24 to 329 (TSNSWIKTVK…FDFDTTFINS (306 aa)) are Lumenal-facing. 3'-phosphoadenylyl sulfate-binding positions include 91–97 (KKSMSTL) and 157–165 (RDPIARFIS).

Belongs to the sulfotransferase 2 family. In terms of tissue distribution, highly expressed in the head and tail of hermaphrodites, in particular in amphid and phasmid sheath cells.

Its subcellular location is the golgi apparatus membrane. The enzyme catalyses chondroitin beta-D-glucuronate + n 3'-phosphoadenylyl sulfate = chondroitin 4'-sulfate + n adenosine 3',5'-bisphosphate + n H(+). Its function is as follows. Catalyzes the transfer of sulfate to position 4 of non-reducing N-acetylgalactosamine (GalNAc) residue of chondroitin. In Caenorhabditis elegans, this protein is Carbohydrate sulfotransferase chst-1.